The chain runs to 210 residues: Large ribosomal subunit protein uL3 (210 aa).

Belongs to the universal ribosomal protein uL3 family. Part of the 50S ribosomal subunit. Forms a cluster with proteins L14 and L19.

In terms of biological role, one of the primary rRNA binding proteins, it binds directly near the 3'-end of the 23S rRNA, where it nucleates assembly of the 50S subunit. In Solibacter usitatus (strain Ellin6076), this protein is Large ribosomal subunit protein uL3.